A 514-amino-acid polypeptide reads, in one-letter code: GMP synthase [glutamine-hydrolyzing] (514 aa).

The Glutamine amidotransferase type-1 domain maps to 9–199 (MILVLDFGGQ…LFEVCQCTGD (191 aa)). Cys86 functions as the Nucleophile in the catalytic mechanism. Residues His173 and Glu175 contribute to the active site. Positions 200-389 (WSMENFIEIE…LGLSDEIVWR (190 aa)) constitute a GMPS ATP-PPase domain. 227-233 (SGGVDSS) contributes to the ATP binding site.

As to quaternary structure, homodimer.

It carries out the reaction XMP + L-glutamine + ATP + H2O = GMP + L-glutamate + AMP + diphosphate + 2 H(+). The protein operates within purine metabolism; GMP biosynthesis; GMP from XMP (L-Gln route): step 1/1. In terms of biological role, catalyzes the synthesis of GMP from XMP. This is GMP synthase [glutamine-hydrolyzing] from Exiguobacterium sibiricum (strain DSM 17290 / CCUG 55495 / CIP 109462 / JCM 13490 / 255-15).